Reading from the N-terminus, the 133-residue chain is Large-conductance mechanosensitive channel (133 aa).

3 consecutive transmembrane segments (helical) span residues 8–28 (FAMK…GAFG), 30–50 (IVTS…LGGI), and 73–93 (GQFI…FLFI).

Belongs to the MscL family. In terms of assembly, homopentamer.

The protein resides in the cell membrane. Channel that opens in response to stretch forces in the membrane lipid bilayer. May participate in the regulation of osmotic pressure changes within the cell. This is Large-conductance mechanosensitive channel from Hathewaya histolytica (Clostridium histolyticum).